Here is a 594-residue protein sequence, read N- to C-terminus: UvrABC system protein C (594 aa).

A GIY-YIG domain is found at 14–91 (DQPGCYLMKD…IKKHDPKYNI (78 aa)). The UVR domain maps to 196-231 (KEVRSELETKMYEASEKLEFERAKELRDQIAHIDAI).

It belongs to the UvrC family. Interacts with UvrB in an incision complex.

Its subcellular location is the cytoplasm. In terms of biological role, the UvrABC repair system catalyzes the recognition and processing of DNA lesions. UvrC both incises the 5' and 3' sides of the lesion. The N-terminal half is responsible for the 3' incision and the C-terminal half is responsible for the 5' incision. The polypeptide is UvrABC system protein C (Bacillus cereus (strain AH187)).